Consider the following 1284-residue polypeptide: DNA-directed RNA polymerase subunit beta (1284 aa).

It belongs to the RNA polymerase beta chain family. As to quaternary structure, the RNAP catalytic core consists of 2 alpha, 1 beta, 1 beta' and 1 omega subunit. When a sigma factor is associated with the core the holoenzyme is formed, which can initiate transcription.

It carries out the reaction RNA(n) + a ribonucleoside 5'-triphosphate = RNA(n+1) + diphosphate. In terms of biological role, DNA-dependent RNA polymerase catalyzes the transcription of DNA into RNA using the four ribonucleoside triphosphates as substrates. The protein is DNA-directed RNA polymerase subunit beta of Mesoplasma florum (strain ATCC 33453 / NBRC 100688 / NCTC 11704 / L1) (Acholeplasma florum).